The sequence spans 69 residues: Cap-specific mRNA (nucleoside-2'-O-)-methyltransferase (69 aa).

Tyr22 provides a ligand contact to mRNA. 3 residues coordinate S-adenosyl-L-methionine: Gln39, Tyr66, and Gly68.

Belongs to the class I-like SAM-binding methyltransferase superfamily. Poxvirus/kinetoplastid 2'-O-MTase family. In terms of assembly, interacts with poly(A) polymerase catalytic subunit OPG063. Interacts with OPG109 and OPG123; these interactions might help linking transcription to capping and polyadenylation.

It is found in the virion. It catalyses the reaction a 5'-end (N(7)-methyl 5'-triphosphoguanosine)-ribonucleoside in mRNA + S-adenosyl-L-methionine = a 5'-end (N(7)-methyl 5'-triphosphoguanosine)-(2'-O-methyl-ribonucleoside) in mRNA + S-adenosyl-L-homocysteine + H(+). Its function is as follows. Displays methyltransferase, positive regulation of the poly(A) polymerase and transcription elongation activities. Involved in the modification of both mRNA ends and in intermediate and late gene positive transcription elongation. At the mRNAs 5' end, methylates the ribose 2' OH group of the first transcribed nucleotide, thereby producing a 2'-O-methylpurine cap. At the 3' end, functions as a processivity factor which stimulates the activity of the viral poly(A) polymerase OPG063 that creates mRNA's poly(A) tail. In the presence of OPG102, OPG063 does not dissociate from the RNA allowing tail elongation to around 250 adenylates. In Sus scrofa (Pig), this protein is Cap-specific mRNA (nucleoside-2'-O-)-methyltransferase (OPG102).